The primary structure comprises 228 residues: UPF0134 protein MPN_137 (228 aa).

Belongs to the UPF0134 family.

This Mycoplasma pneumoniae (strain ATCC 29342 / M129 / Subtype 1) (Mycoplasmoides pneumoniae) protein is UPF0134 protein MPN_137.